The chain runs to 294 residues: Endonuclease 3 (294 aa).

The signal sequence occupies residues methionine 1–cysteine 24. 2 residues coordinate a divalent metal cation: tryptophan 25 and histidine 30. A substrate-binding site is contributed by tryptophan 25–histidine 30. A disulfide bond links cysteine 34 and cysteine 65. Residues aspartate 69 and histidine 84 each contribute to the a divalent metal cation site. Substrate contacts are provided by residues aspartate 69 to proline 75, histidine 84 to aspartate 87, and asparagine 94 to arginine 99. Disulfide bonds link cysteine 93/cysteine 241, cysteine 101/cysteine 106, and cysteine 221/cysteine 228. Positions 113 and 131 each coordinate substrate. Asparagine 113 is a glycosylation site (N-linked (GlcNAc...) asparagine). A glycan (N-linked (GlcNAc...) asparagine) is linked at asparagine 132. A divalent metal cation-binding residues include histidine 142, aspartate 146, histidine 152, histidine 176, and aspartate 180. Residues histidine 142 to tyrosine 191 form a substrate binding region. 3 N-linked (GlcNAc...) asparagine glycosylation sites follow: asparagine 193, asparagine 224, and asparagine 247. Residues glycine 279–alanine 294 constitute a propeptide, removed in mature form.

The protein belongs to the nuclease type I family. In terms of assembly, monomer. It depends on Zn(2+) as a cofactor. The cofactor is Mn(2+).

It carries out the reaction Endonucleolytic cleavage to 5'-phosphomononucleotide and 5'-phosphooligonucleotide end-products.. Endonuclease that can use RNA and single-stranded DNA as substrates. In contradiction with PubMed:23620482, cannot hydrolyze single-stranded DNA and does not cleave mismatches. This Arabidopsis thaliana (Mouse-ear cress) protein is Endonuclease 3.